We begin with the raw amino-acid sequence, 548 residues long: Chaperonin GroEL (548 aa).

ATP-binding positions include T30–P33, K51, D87–T91, G415, N479–A481, and D495.

The protein belongs to the chaperonin (HSP60) family. Forms a cylinder of 14 subunits composed of two heptameric rings stacked back-to-back. Interacts with the co-chaperonin GroES.

The protein resides in the cytoplasm. It catalyses the reaction ATP + H2O + a folded polypeptide = ADP + phosphate + an unfolded polypeptide.. In terms of biological role, together with its co-chaperonin GroES, plays an essential role in assisting protein folding. The GroEL-GroES system forms a nano-cage that allows encapsulation of the non-native substrate proteins and provides a physical environment optimized to promote and accelerate protein folding. The sequence is that of Chaperonin GroEL from Oleidesulfovibrio alaskensis (strain ATCC BAA-1058 / DSM 17464 / G20) (Desulfovibrio alaskensis).